We begin with the raw amino-acid sequence, 151 residues long: MNIKYFLLIITILGFLARSRVLVIAGLLLLTIYEFEIDFVFEFLGNKGIEIGLIFLLMAILSSLVLSPVDGEVIKDNLLSWQGTVAIIAGVLATKFNGMGLDLLQESPQFILGIIMGSLVGIVFFGGIPVGPLMAAGIGAVLFKIIEIIKG.

The next 5 helical transmembrane spans lie at 7-29 (LLII…GLLL), 49-69 (IEIG…LSPV), 84-104 (TVAI…LDLL), 110-130 (FILG…GIPV), and 131-151 (GPLM…IIKG).

Belongs to the UPF0756 family.

It localises to the cell membrane. This Halothermothrix orenii (strain H 168 / OCM 544 / DSM 9562) protein is UPF0756 membrane protein Hore_21770.